The primary structure comprises 166 residues: MLVIHNRIEPQAEWAAELHLNFEARSKSRLRCFSAENEDVGLFLQRGQSPLRDGEFLKAEDGRVVRVCARPEKLMHVTCSSTFELTRAAYHLGNRHVALQVGDGWLRLLDDYVLKAMLDQLGATVETIEAPFQPEHGAYGGGHHHSRAGEEDFNYPPRMHQFGVRK.

This sequence belongs to the UreE family.

It is found in the cytoplasm. Its function is as follows. Involved in urease metallocenter assembly. Binds nickel. Probably functions as a nickel donor during metallocenter assembly. In Pseudomonas savastanoi pv. phaseolicola (strain 1448A / Race 6) (Pseudomonas syringae pv. phaseolicola (strain 1448A / Race 6)), this protein is Urease accessory protein UreE.